The sequence spans 248 residues: MRSSGRKKEQIRPVKITRNFTKYAEGSVLIEVGDTKVLCTASIEEKVPPFLKGSGEGWITAEYNMLPRSTQSRKQREINKLKIDGRTMEIQRLIGRALRSAVDMKALGEKTIWIDCDVLQADGGTRTTSITGSFVALVDAVNKLHQKKPFNVYPIRHFVSAVSVGIVGEEKVLDLCYEEDHVAKVDMNVVMTEEGEFIEIQGTGEAGPFSRKELDELLNLAEKGAKQMIQAQKDALKTDSLWIGTGRE.

Phosphate contacts are provided by residues Arg-86 and 124 to 126 (GTR).

This sequence belongs to the RNase PH family. Homohexameric ring arranged as a trimer of dimers.

The enzyme catalyses tRNA(n+1) + phosphate = tRNA(n) + a ribonucleoside 5'-diphosphate. Phosphorolytic 3'-5' exoribonuclease that plays an important role in tRNA 3'-end maturation. Removes nucleotide residues following the 3'-CCA terminus of tRNAs; can also add nucleotides to the ends of RNA molecules by using nucleoside diphosphates as substrates, but this may not be physiologically important. Probably plays a role in initiation of 16S rRNA degradation (leading to ribosome degradation) during starvation. This chain is Ribonuclease PH, found in Clostridium perfringens (strain ATCC 13124 / DSM 756 / JCM 1290 / NCIMB 6125 / NCTC 8237 / Type A).